Consider the following 608-residue polypeptide: MKTLLIHAKHFEYEAREKALDAAESIDGNRSGSFENALVVFVTVEKGDGSSQDVVEEAAADVLDVFRRVGASRVVVYPYAHLSDDLADPEEAKRVLSQLAERISSAGVPVSRAPFGWYKRFSVECYGHPLSELSRTIKPGRRVRPGYADFAVMFPDGRIVGIEELRAEELPEDFVALLEAEVFKKKREGGEPKYLEYCRKFGFEWEPMSDLGHMRYGPEATIMLDAVAEYAWQCARSLGIPVYKVRGTNTFNLSFKPVAQHAQLFGDRLYQMEVDEKKLILRYAACHQQFAMVKDWEISYRDLPFGAFEVADSYRLEQPGELLLCFRLRKFYMPDLHVFCKDLAEAMEVSFRIHSKIYEEIRKLGRDYVSIYNLTRSFLEQHRDYLKRLVEMEGKPVLLHFVPEGKYYWVINVEYNIIDELGRPREIGTFQIDVGNAERFGITYVDENNTRRYPVIIHTAIIGSLERYVFAVLDTAAKKARAGEVPSLPLWLSPVQVRVIPHSSEYLKLADSIADKLEEQGIRVDVDDREESLAKRIRDAEVKWIPYVVVVGKREAESGKLTVRVRGQGQYEMSLEELVGRLVSELKGYPRVSAALPRYVSARPRYSP.

Positions 1–145 are editing domain; it reads MKTLLIHAKH…TIKPGRRVRP (145 aa). Catalytic regions lie at residues 192 to 489 and 193 to 489; these read PKYL…PSLP and KYLE…PSLP. Residues Cys-286, His-337, and His-458 each contribute to the Zn(2+) site.

It belongs to the class-II aminoacyl-tRNA synthetase family. As to quaternary structure, homodimer. Zn(2+) is required as a cofactor.

It localises to the cytoplasm. The enzyme catalyses tRNA(Thr) + L-threonine + ATP = L-threonyl-tRNA(Thr) + AMP + diphosphate + H(+). Its function is as follows. Catalyzes the attachment of threonine to tRNA(Thr) in a two-step reaction: L-threonine is first activated by ATP to form Thr-AMP and then transferred to the acceptor end of tRNA(Thr). Also edits incorrectly charged L-seryl-tRNA(Thr). In Thermofilum pendens (strain DSM 2475 / Hrk 5), this protein is Threonine--tRNA ligase.